The following is a 438-amino-acid chain: MMADEELGDEVKVFRRDEDADDDPMISGETSEQQLADDKKEAVMEAELDGAGRNPSIDVLKSAFPKVEPMSPSFPGLMSHFSPGYSAAALPMFMPLFMNPYAAALRSPSLMFPMGAMSPTFPMFPPSPVYGAAIAAAAAKQHFENMAPLNMRAGHPMNQMGMPPYMHPSSMAPQNVDRRAQGGGKAKKDDHVKKPLNAFMWFMKENRKALLEEIGNNEKQSAELNKELGKRWHDLSKEEQAKYFEMAKKDKETHKERYPEWSARENYAVNKKKTKKRRDKSIPSENNDQKKCRARFGVNNTEMWCKFCKRKKKCEYATDRSGGSDITDSQDGRGTSGAYSSSSESPSPKANAGIALTTQQQQAAMMHTMLMQMRLGSTTGASTHVPSPLASSSAGRSPLDANASDSESDVEEEEDEQIDPTVMQQTHDMLMQESMCTI.

Positions 1–39 (MMADEELGDEVKVFRRDEDADDDPMISGETSEQQLADDK) are disordered. The segment at 1–45 (MMADEELGDEVKVFRRDEDADDDPMISGETSEQQLADDKKEAVME) is sufficient for interaction with beta-catenin/sys-1. Positions 9–18 (DEVKVFRRDE) are enriched in basic and acidic residues. Residues 88-130 (AALPMFMPLFMNPYAAALRSPSLMFPMGAMSPTFPMFPPSPVY) form an involved in nuclear asymmetry region. A phosphoserine; by LIT1 mark is found at S118 and S127. The segment at residues 192–262 (VKKPLNAFMW…THKERYPEWS (71 aa)) is a DNA-binding region (HMG box). Positions 250–263 (DKETHKERYPEWSA) are enriched in basic and acidic residues. Disordered regions lie at residues 250–288 (DKET…ENND), 318–351 (TDRS…PKAN), and 378–438 (TTGA…MCTI). Positions 270 to 279 (NKKKTKKRRD) are enriched in basic residues. Composition is skewed to polar residues over residues 324–339 (SDIT…SGAY) and 378–395 (TTGA…SSAG). A compositionally biased stretch (acidic residues) spans 406-418 (SESDVEEEEDEQI).

This sequence belongs to the TCF/LEF family. Interacts (via N-terminal region) with beta-catenin homolog sys-1. Interacts with hda-1. Interacts with bar-1. Interacts with par-5; the interaction is direct and is enhanced by lit-1-mediated pop-1 phosphorylation. The interaction also leads to the subsequent nuclear export of pop-1. Interacts (when phosphorylated on Ser-118 and Ser-127) with lit-1; the interaction is dependent on the beta-catenin-lit-1 complex. Interacts with wrm-1. Interacts with homeobox protein egl-5. Interacts with zinc finger transcription factor ref-2; the interaction is direct and facilitates transcriptional activation; transcription may be repressed by beta-catenin/sys-1. Post-translationally, phosphorylated on Ser-118 and Ser-127 by lit-1 in the beta-catenin-lit-1 complex. Phosphorylation promotes the interaction of pop-1 and par-5 and the subsequent translocation of pop-1 from the nucleus to the cytoplasm.

Its subcellular location is the nucleus. The protein localises to the cytoplasm. Functionally, transcription factor. Part of the Wnt signaling asymmetry pathway. Binds to the consensus sequence, 5'-(C/T)TTTG(A/T)(A/T)(G/C)-3'. Activates or represses target gene expression, depending on upstream Wnt signals and interactions with transcription co-regulators, such as beta-catenin/sys-1 or zinc finger transcription factor ref-2. Essential for the specification of the mesodermal and endodermal cell fates in early embryos. Required in many asymmetrical cell divisions in the early embryo and during larval development. Reciprocal distribution patterns of sys-1 and pop-1 in the daughters of anterior-posterior cell divisions functions in specifying cell fate; a higher sys-1 to pop-1 ratio promotes the posterior cell fate, whereas a low sys-1 to pop-1 ratio promotes the anterior fate. Involved in modulating nuclear localization or nuclear retention of sys-1. Involved in the terminal asymmetrical division of many embryonic neuroblasts; for example in the SMDD/AIY neuron lineage. In complex with ref-2, positively modulates expression of LIM/homeobox protein ttx-3 in anterior daughter cells of the SMDD/AIY lineage. Required for asymmetrical division of somatic gonadal precursor descendants which initiate axis formation required to control organ shape. Similarly, involved in asymmetrical division of seam cells, a stem cell-like lineage. Represses expression of target genes via its interaction with hda-1 histone deacetylase. Required for specification of the M lineage-derived coelomocyte and sex myoblast fate. Regulates coelomocyte fate by positively regulating proliferation and ceh-34 and possibly eya-1 expression in M.dlpa and M.drpa precursors. The chain is Protein pop-1 from Caenorhabditis elegans.